Reading from the N-terminus, the 154-residue chain is Transcriptional repressor NrdR (154 aa).

The segment at Cys-3 to Cys-34 is a zinc-finger region. The ATP-cone domain maps to Pro-49–Glu-139.

The protein belongs to the NrdR family. Zn(2+) is required as a cofactor.

Its function is as follows. Negatively regulates transcription of bacterial ribonucleotide reductase nrd genes and operons by binding to NrdR-boxes. The chain is Transcriptional repressor NrdR from Pseudomonas putida (strain ATCC 700007 / DSM 6899 / JCM 31910 / BCRC 17059 / LMG 24140 / F1).